The chain runs to 132 residues: Nickel-responsive regulator (132 aa).

Ni(2+) is bound by residues H76, H87, H89, and C95.

This sequence belongs to the transcriptional regulatory CopG/NikR family. In terms of assembly, homotetramer. Ni(2+) serves as cofactor.

Its function is as follows. Transcriptional repressor of the nikABCDE operon. Is active in the presence of excessive concentrations of intracellular nickel. The protein is Nickel-responsive regulator of Klebsiella pneumoniae subsp. pneumoniae (strain ATCC 700721 / MGH 78578).